The following is a 392-amino-acid chain: MLLSLAQWLQSISPEFGSFRVFQYLTFRAVMAALTALLIGLLAGPFVIRRLISLKIGQPIREYAMQTHLSKSGTPTMGGVLILMSIGISTLLWFDLSNRFVWIVLLVTLGFGAIGWADDWRKVVLKDPEGMRSREKYLWQSLIGLVAALYLVFSISESSNLRVLELFFSWVQSGFDVDLPPKAGLLVPFVKEISYPLGVFGFVILTYLVIVGSSNAVNLTDGLDGLAIMPVVMVGSALGVFAYVTGSAVYSKYLFFPHIPGSGELLIFCSAMAGAGLAFLWFNTHPAQVFMGDVGALALGAALGTIAVIVRQEIVLAIMGGIFVVEALSVMMQVIWFKYTKKRYGEGRRLFKMAPLHHHFEKSGWKETQVVVRFWIITMLLCLVGLSTLKLR.

10 helical membrane-spanning segments follow: residues 29 to 49, 76 to 96, 100 to 120, 137 to 157, 193 to 213, 225 to 245, 262 to 282, 289 to 309, 314 to 334, and 369 to 389; these read AVMA…FVIR, TMGG…WFDL, FVWI…ADDW, YLWQ…SISE, ISYP…IVGS, GLAI…AYVT, SGEL…FLWF, VFMG…IAVI, IVLA…MMQV, and QVVV…LSTL.

This sequence belongs to the glycosyltransferase 4 family. MraY subfamily. The cofactor is Mg(2+).

Its subcellular location is the cell inner membrane. The catalysed reaction is UDP-N-acetyl-alpha-D-muramoyl-L-alanyl-gamma-D-glutamyl-meso-2,6-diaminopimeloyl-D-alanyl-D-alanine + di-trans,octa-cis-undecaprenyl phosphate = di-trans,octa-cis-undecaprenyl diphospho-N-acetyl-alpha-D-muramoyl-L-alanyl-D-glutamyl-meso-2,6-diaminopimeloyl-D-alanyl-D-alanine + UMP. The protein operates within cell wall biogenesis; peptidoglycan biosynthesis. Functionally, catalyzes the initial step of the lipid cycle reactions in the biosynthesis of the cell wall peptidoglycan: transfers peptidoglycan precursor phospho-MurNAc-pentapeptide from UDP-MurNAc-pentapeptide onto the lipid carrier undecaprenyl phosphate, yielding undecaprenyl-pyrophosphoryl-MurNAc-pentapeptide, known as lipid I. This Polaromonas sp. (strain JS666 / ATCC BAA-500) protein is Phospho-N-acetylmuramoyl-pentapeptide-transferase.